Here is a 152-residue protein sequence, read N- to C-terminus: Ninjurin-1 (152 aa).

The residue at position 1 (Met-1) is an N-acetylmethionine. The segment at 1–26 is disordered; the sequence is MDSGTEEYELNGGLPPGTPGSPDASP. Residues 1 to 78 are Extracellular-facing; it reads MDSGTEEYEL…EQGPSFAFYV (78 aa). Residues Ser-21 and Ser-25 each carry the phosphoserine modification. The tract at residues 26–37 is N-terminal adhesion motif; the sequence is PARWGWRHGPIN. Residues 40-69 form a required to induce plasma membrane rupture region; it reads HYASKKSAAESMLDIALLMANASQLKAVVE. Residues 44–55 are helix alpha1; it reads KKSAAESMLDIA. Positions 58–74 are helix alpha2; the sequence is MANASQLKAVVEQGPSF. Asn-60 is a glycosylation site (N-linked (GlcNAc...) asparagine). The chain crosses the membrane as a helical span at residues 79 to 103; sequence PLVVLISISLVLQIGVGVLLIFLVK. Residues 104–113 are Cytoplasmic-facing; sequence YDLNNPAKHA. Residues 114 to 138 traverse the membrane as a helical segment; sequence KLDFLNNLATGLVFIIVVVNIFITA. Topologically, residues 139–152 are extracellular; it reads FGVQKPLMDMAPQQ.

Belongs to the ninjurin family. Homodimer; in absence of death stimuli, forms an inactive homodimer. Homooligomer; in response to death stimuli, homooligomerizes into long, highly branched filaments and large, ring-shaped structures in the membrane. In terms of processing, cleaved by MMP9 protease to generate the Secreted ninjurin-1 form. Post-translationally, N-linked glycosylation is required for homooligomerization. Widely expressed in both adult and embryonic tissues, primarily those of epithelial origin.

The protein resides in the cell membrane. The protein localises to the synaptic cell membrane. Its subcellular location is the secreted. In response to death stimuli, homooligomerizes and disrupts membrane integrity by introducing the hydrophilic faces of alpha1 and alpha2 helices into the hydrophobic membrane. Homooligomerization and ability to mediate plasma membrane rupture is inhibited by glycine; it is unclear whether glycine directly or indirectly inhibits homooligomerization. In normal conditions, NINJ1 is autoinhibited via formation of a homodimer: in the inactive homodimer, the alpha1 and alpha2 helices (residues 44-74) form a single transmembrane region without a kink, in which hydrophilic faces of alpha1 and alpha2 helices are sequestered. In terms of biological role, effector of various programmed cell death, such as pyroptosis and necroptosis, which mediates plasma membrane rupture (cytolysis). Oligomerizes in response to death stimuli and forms ring-like structures on the plasma membrane: acts by cutting and shedding membrane disks, like a cookie cutter, leading to membrane damage and loss that cannot be repaired by the cell. Plasma membrane rupture leads to release intracellular molecules named damage-associated molecular patterns (DAMPs) that propagate the inflammatory response. Mechanistically, mediates plasma membrane rupture by introducing hydrophilic faces of 2 alpha helices into the hydrophobic membrane. Induces plasma membrane rupture downstream of Gasdermin (GSDMA, GSDMB, GSDMC, GSDMD, or GSDME) or MLKL during pyroptosis or necroptosis, respectively. Acts as an effector of PANoptosis downstream of CASP1, CASP4, CASP8 and RIPK3. Also induces plasma membrane rupture in response to cell swelling caused by osmotic stress and ferroptosis downstream of lipid peroxidation. Acts as a regulator of Toll-like receptor 4 (TLR4) signaling triggered by lipopolysaccharide (LPS) during systemic inflammation; directly binds LPS. Involved in leukocyte migration during inflammation by promoting transendothelial migration of macrophages via homotypic binding. Promotes the migration of monocytes across the brain endothelium to central nervous system inflammatory lesions. Also acts as a homophilic transmembrane adhesion molecule involved in various processes such as axonal growth, cell chemotaxis and angiogenesis. Promotes cell adhesion by mediating homophilic interactions via its extracellular N-terminal adhesion motif (N-NAM). Involved in the progression of the inflammatory stress by promoting cell-to-cell interactions between immune cells and endothelial cells. Plays a role in nerve regeneration by promoting maturation of Schwann cells. Acts as a regulator of angiogenesis. Promotes the formation of new vessels by mediating the interaction between capillary pericyte cells and endothelial cells. Promotes osteoclasts development by enhancing the survival of prefusion osteoclasts. Also involved in striated muscle growth and differentiation. Functionally, secreted form generated by cleavage, which has chemotactic activity. Acts as an anti-inflammatory mediator by promoting monocyte recruitment, thereby ameliorating atherosclerosis. This chain is Ninjurin-1, found in Homo sapiens (Human).